The primary structure comprises 339 residues: Cathepsin B (339 aa).

Positions 1–17 (MWWLWASLCCLLALGDA) are cleaved as a signal peptide. Positions 18–79 (RSRPSFHPLS…QRVMFTEDLK (62 aa)) are cleaved as a propeptide — activation peptide. 6 disulfides stabilise this stretch: cysteine 93–cysteine 122, cysteine 105–cysteine 150, cysteine 141–cysteine 207, cysteine 142–cysteine 146, cysteine 179–cysteine 211, and cysteine 187–cysteine 198. The active site involves cysteine 108. An N-linked (GlcNAc...) asparagine glycan is attached at asparagine 192. At lysine 220 the chain carries N6-acetyllysine. Catalysis depends on residues histidine 278 and asparagine 298. The propeptide occupies 334–339 (QYWEKI).

This sequence belongs to the peptidase C1 family. In terms of assembly, dimer of a heavy chain and a light chain cross-linked by a disulfide bond. Interacts with SRPX2. Directly interacts with SHKBP1.

Its subcellular location is the lysosome. It localises to the melanosome. The protein localises to the secreted. The protein resides in the extracellular space. It is found in the apical cell membrane. The enzyme catalyses Hydrolysis of proteins with broad specificity for peptide bonds. Preferentially cleaves -Arg-Arg-|-Xaa bonds in small molecule substrates (thus differing from cathepsin L). In addition to being an endopeptidase, shows peptidyl-dipeptidase activity, liberating C-terminal dipeptides.. In terms of biological role, thiol protease which is believed to participate in intracellular degradation and turnover of proteins. Cleaves matrix extracellular phosphoglycoprotein MEPE. Involved in the solubilization of cross-linked TG/thyroglobulin in the thyroid follicle lumen. Has also been implicated in tumor invasion and metastasis. The protein is Cathepsin B (CTSB) of Macaca fascicularis (Crab-eating macaque).